The chain runs to 409 residues: tRNA-specific 2-thiouridylase MnmA (409 aa).

ATP-binding positions include 20–27 (AMSGGVDS) and Leu46. Cys114 acts as the Nucleophile in catalysis. Cys114 and Cys210 are disulfide-bonded. ATP is bound at residue Gly138. The interval 160 to 162 (RDQ) is interaction with tRNA. Cys210 acts as the Cysteine persulfide intermediate in catalysis.

This sequence belongs to the MnmA/TRMU family.

It is found in the cytoplasm. The enzyme catalyses S-sulfanyl-L-cysteinyl-[protein] + uridine(34) in tRNA + AH2 + ATP = 2-thiouridine(34) in tRNA + L-cysteinyl-[protein] + A + AMP + diphosphate + H(+). Catalyzes the 2-thiolation of uridine at the wobble position (U34) of tRNA, leading to the formation of s(2)U34. The polypeptide is tRNA-specific 2-thiouridylase MnmA (Bartonella henselae (strain ATCC 49882 / DSM 28221 / CCUG 30454 / Houston 1) (Rochalimaea henselae)).